A 91-amino-acid chain; its full sequence is Small ribosomal subunit protein bS20 (91 aa).

This sequence belongs to the bacterial ribosomal protein bS20 family.

Functionally, binds directly to 16S ribosomal RNA. In Wolinella succinogenes (strain ATCC 29543 / DSM 1740 / CCUG 13145 / JCM 31913 / LMG 7466 / NCTC 11488 / FDC 602W) (Vibrio succinogenes), this protein is Small ribosomal subunit protein bS20.